The following is a 292-amino-acid chain: 33 kDa chaperonin (292 aa).

2 cysteine pairs are disulfide-bonded: Cys238–Cys240 and Cys271–Cys274.

Belongs to the HSP33 family. Post-translationally, under oxidizing conditions two disulfide bonds are formed involving the reactive cysteines. Under reducing conditions zinc is bound to the reactive cysteines and the protein is inactive.

The protein resides in the cytoplasm. In terms of biological role, redox regulated molecular chaperone. Protects both thermally unfolding and oxidatively damaged proteins from irreversible aggregation. Plays an important role in the bacterial defense system toward oxidative stress. This chain is 33 kDa chaperonin, found in Alkaliphilus metalliredigens (strain QYMF).